The sequence spans 470 residues: Cell division protein FtsP (470 aa).

The tat-type signal signal peptide spans Met-1–Ala-27. A Plastocyanin-like domain is found at Val-222 to Asn-287.

It belongs to the FtsP family. In terms of processing, predicted to be exported by the Tat system. The position of the signal peptide cleavage has not been experimentally proven.

The protein localises to the periplasm. Its function is as follows. Cell division protein that is required for growth during stress conditions. May be involved in protecting or stabilizing the divisomal assembly under conditions of stress. This chain is Cell division protein FtsP, found in Salmonella typhi.